Reading from the N-terminus, the 487-residue chain is GTPase Der (487 aa).

EngA-type G domains lie at 3-166 (PVIA…PRDA) and 193-366 (IKIA…QSAV). GTP is bound by residues 9-16 (GRPNVGKS), 56-60 (DTGGI), 118-121 (NKID), 199-206 (GRPNVGKS), 246-250 (DTAGV), and 311-314 (NKWD). Residues 367 to 451 (TRWPTSRLTQ…PIRIEYKGGE (85 aa)) form the KH-like domain. The segment covering 448–461 (KGGENPYEGKKNTL) has biased composition (basic and acidic residues). The interval 448 to 487 (KGGENPYEGKKNTLTDRQVNKKRRLMSHHKKAEKKRRDKR) is disordered. Positions 467–487 (NKKRRLMSHHKKAEKKRRDKR) are enriched in basic residues.

Belongs to the TRAFAC class TrmE-Era-EngA-EngB-Septin-like GTPase superfamily. EngA (Der) GTPase family. Associates with the 50S ribosomal subunit.

Its function is as follows. GTPase that plays an essential role in the late steps of ribosome biogenesis. This Pseudomonas putida (strain ATCC 700007 / DSM 6899 / JCM 31910 / BCRC 17059 / LMG 24140 / F1) protein is GTPase Der.